Reading from the N-terminus, the 287-residue chain is Large ribosomal subunit protein uL2 (287 aa).

The segment at 216–287 (RRPEVRGSVM…SKRGRGGRDA (72 aa)) is disordered. Residues 271-287 (QRRRRKSSKRGRGGRDA) show a composition bias toward basic residues.

This sequence belongs to the universal ribosomal protein uL2 family. As to quaternary structure, part of the 50S ribosomal subunit. Forms a bridge to the 30S subunit in the 70S ribosome.

Functionally, one of the primary rRNA binding proteins. Required for association of the 30S and 50S subunits to form the 70S ribosome, for tRNA binding and peptide bond formation. It has been suggested to have peptidyltransferase activity; this is somewhat controversial. Makes several contacts with the 16S rRNA in the 70S ribosome. This Synechococcus sp. (strain ATCC 27144 / PCC 6301 / SAUG 1402/1) (Anacystis nidulans) protein is Large ribosomal subunit protein uL2.